We begin with the raw amino-acid sequence, 1755 residues long: Transposon Ty1-GR2 Gag-Pol polyprotein (1755 aa).

The span at 1–16 shows a compositional bias: low complexity; that stretch reads MESQQLSQHSHISHGS. Disordered regions lie at residues 1 to 93, 126 to 173, and 352 to 421; these read MESQ…MMTQ, PQSQ…RPPP, and GSRN…SKST. Composition is skewed to polar residues over residues 48–60 and 127–152; these read TKAN…TPAS and QSQF…GNTF. Low complexity predominate over residues 153–165; the sequence is TDSSSADSDMTST. Residues 299-401 are RNA-binding; sequence NNGIHINNKV…NSKSKTARAH (103 aa). Positions 402–418 are enriched in low complexity; sequence NVSTSNNSPSTDNDSIS. Residue S416 is modified to Phosphoserine. Residue D461 is the For protease activity; shared with dimeric partner of the active site. The integrase-type zinc finger-like stretch occupies residues 583-640; sequence NVHTSESTRKYPYPFIHRMLAHANAQTIRYSLKNNTITYFNESDVDWSSAIDYQCPDC. Residues 660 to 835 enclose the Integrase catalytic domain; that stretch reads NSYEPFQYLH…AGLDISTLLP (176 aa). 2 residues coordinate Mg(2+): D671 and D736. Disordered stretches follow at residues 956-1087, 1092-1111, and 1130-1187; these read SKAV…ETEK, RSPS…NIVP, and DLPL…DNET. Residues 960–969 are compositionally biased toward low complexity; sequence SPTDSTPPST. Residues 1005-1015 show a composition bias toward polar residues; it reads STPQISNIEST. The segment covering 1038–1053 has biased composition (basic and acidic residues); that stretch reads ESSHASKSKDFRHSDS. 2 stretches are compositionally biased toward polar residues: residues 1054–1082 and 1101–1111; these read YSEN…QISD and PENNSSHNIVP. Positions 1178 to 1212 match the Bipartite nuclear localization signal motif; that stretch reads KKRSLEDNETEIKVSRDTWNTKNMRSLEPPRSKKR. Residues 1338–1476 enclose the Reverse transcriptase Ty1/copia-type domain; sequence NNYYITQLDI…DILGLEIKYQ (139 aa). Residues D1346, D1427, D1428, D1610, E1652, and D1685 each contribute to the Mg(2+) site. An RNase H Ty1/copia-type domain is found at 1610 to 1752; it reads DASYGNQPYY…IKTFKLLTNK (143 aa).

As to quaternary structure, the capsid protein forms a homotrimer, from which the VLPs are assembled. The protease is a homodimer, whose active site consists of two apposed aspartic acid residues. Initially, virus-like particles (VLPs) are composed of the structural unprocessed proteins Gag and Gag-Pol, and also contain the host initiator methionine tRNA (tRNA(i)-Met) which serves as a primer for minus-strand DNA synthesis, and a dimer of genomic Ty RNA. Processing of the polyproteins occurs within the particle and proceeds by an ordered pathway, called maturation. First, the protease (PR) is released by autocatalytic cleavage of the Gag-Pol polyprotein yielding capsid protein p45 and a Pol-p154 precursor protein. This cleavage is a prerequisite for subsequent processing of Pol-p154 at the remaining sites to release the mature structural and catalytic proteins. Maturation takes place prior to the RT reaction and is required to produce transposition-competent VLPs.

It localises to the cytoplasm. It is found in the nucleus. It catalyses the reaction DNA(n) + a 2'-deoxyribonucleoside 5'-triphosphate = DNA(n+1) + diphosphate. The enzyme catalyses Endonucleolytic cleavage to 5'-phosphomonoester.. Capsid protein (CA) is the structural component of the virus-like particle (VLP), forming the shell that encapsulates the retrotransposons dimeric RNA genome. The particles are assembled from trimer-clustered units and there are holes in the capsid shells that allow for the diffusion of macromolecules. CA also has nucleocapsid-like chaperone activity, promoting primer tRNA(i)-Met annealing to the multipartite primer-binding site (PBS), dimerization of Ty1 RNA and initiation of reverse transcription. Functionally, the aspartyl protease (PR) mediates the proteolytic cleavages of the Gag and Gag-Pol polyproteins after assembly of the VLP. Its function is as follows. Reverse transcriptase/ribonuclease H (RT) is a multifunctional enzyme that catalyzes the conversion of the retro-elements RNA genome into dsDNA within the VLP. The enzyme displays a DNA polymerase activity that can copy either DNA or RNA templates, and a ribonuclease H (RNase H) activity that cleaves the RNA strand of RNA-DNA heteroduplexes during plus-strand synthesis and hydrolyzes RNA primers. The conversion leads to a linear dsDNA copy of the retrotransposon that includes long terminal repeats (LTRs) at both ends. In terms of biological role, integrase (IN) targets the VLP to the nucleus, where a subparticle preintegration complex (PIC) containing at least integrase and the newly synthesized dsDNA copy of the retrotransposon must transit the nuclear membrane. Once in the nucleus, integrase performs the integration of the dsDNA into the host genome. This is Transposon Ty1-GR2 Gag-Pol polyprotein (TY1B-GR2) from Saccharomyces cerevisiae (strain ATCC 204508 / S288c) (Baker's yeast).